Here is a 215-residue protein sequence, read N- to C-terminus: Transmembrane protein 267 (215 aa).

A run of 3 helical transmembrane segments spans residues 77-97 (FCEV…HFFL), 114-134 (PLHC…LMQL), and 178-198 (YWLY…IMCL).

The protein resides in the membrane. This Xenopus laevis (African clawed frog) protein is Transmembrane protein 267 (tmem267).